An 87-amino-acid chain; its full sequence is Selenoprotein W (87 aa).

The segment at residues 10–13 (CGAU) is a cross-link (cysteinyl-selenocysteine (Cys-Sec); redox-active). U13 is a non-standard amino acid (selenocysteine). At C37 the chain carries S-glutathionyl cysteine.

It belongs to the SelWTH family. Selenoprotein W subfamily. As to quaternary structure, interacts with DPYSL2, PRDX1, YWHAB, YWHAG, HSP70 and HSP90.

The protein localises to the cytoplasm. Plays a role as a glutathione (GSH)-dependent antioxidant. May be involved in a redox-related process. May play a role in the myopathies of selenium deficiency. This chain is Selenoprotein W, found in Sus scrofa (Pig).